A 241-amino-acid chain; its full sequence is Terpene cyclase pyr4 (241 aa).

7 consecutive transmembrane segments (helical) span residues 20–40 (IADWALLAQGLGWSINYLAMI), 49–69 (YGMAILPLCCNFAWEFVYSVI), 79–99 (AVLTTWMILNLFVMYTAIKFA), 113–133 (LPWIFPVAIAAFTAGHLALAA), 141–161 (ANWGAFLCFELLTSGAVCQLM), 168–188 (GASYTIWLSRFLGSYIGGIFL), and 206–226 (FVTWHGLMCFSLDIAYVTFLW).

It belongs to the paxB family.

The protein resides in the membrane. It carries out the reaction 2-oxo-3-[(8S)-epoxy-(2E,6E)-farnesyl]-6-(pyridin-3-yl)-2H-pyran-4-olate + H(+) = deacetylpyripyropene E. It functions in the pathway secondary metabolite biosynthesis; terpenoid biosynthesis. Functionally, terpene cyclase; part of the gene cluster that mediates the biosynthesis of pyripyropene A, a specific human acyl-coenzyme A:cholesterol acyltransferase 2 inhibitor. The first step of the pathway is the synthesis of nicotinyl-CoA from nicotinic acid by the nicotinic acid-CoA ligase pyr1. Nicotinyl-CoA is then a substrate of polyketide synthase pyr2 to produce 4-hydroxy-6-(3-pyridinyl)-2H-pyran-2-one (HPPO) which is further prenylated by the polyprenyl transferase pyr6 to yield farnesyl-HPPO. The next steps consist of an epoxidation of farnesyl-HPPO to epoxyfarnesyl-HPPO by FAD-dependent monooxygenase pyr5 and a cyclization of the terpenoid portion by the terpene cyclase pyr4 to yield deacetyl-pyripyropene E. The 2 cytochrome P450 monooxygenases pyr3 and pyr9, and the 2 acetyltransferases pyr7 and pyr8 are involved in the conversion of deacetyl-pyripyropene E into pyripyropene A through several cycles of oxidation and acetylation steps. Pyr7 acetylates deacetyl-pyripyropene E to pyripyropene E which is oxidized to 11-deacetyl-pyripyropene O by pyr3, which is in turn acetylated into pyripyropene O by pyr8. Pyripyropene O is then oxidized to deacetyl-pyripyropene A by pyr9. Deacetyl-pyripyropene A is finally acetylated to pyripyropene A by pyr8. This Aspergillus fumigatus (strain ATCC MYA-4609 / CBS 101355 / FGSC A1100 / Af293) (Neosartorya fumigata) protein is Terpene cyclase pyr4.